A 227-amino-acid polypeptide reads, in one-letter code: MAYPMQLGFQDATSPIMEELLHFHDHTLMIVLLISSLVLYIISLMLTTKLTHTSTMDAQEVETIWTILPAIILILIALPSLRILYMMDEINNPSLTVKTMGHQWYWSYEYTDYEDLSFDSYMIPTSELKPGELRLLEVDNRVVLPMEMTIRMLVSSEDVLHSWAVPSLGLKTDAIPGRLNQTTLMSTRPGLYYGQCSEICGSNHSFMPIVLEMVPLKYFEKWSASML.

The Mitochondrial intermembrane segment spans residues 1-14; it reads MAYPMQLGFQDATS. Residues 15–45 form a helical membrane-spanning segment; the sequence is PIMEELLHFHDHTLMIVLLISSLVLYIISLM. At 46–59 the chain is on the mitochondrial matrix side; that stretch reads LTTKLTHTSTMDAQ. A helical membrane pass occupies residues 60-87; the sequence is EVETIWTILPAIILILIALPSLRILYMM. Residues 88 to 227 are Mitochondrial intermembrane-facing; it reads DEINNPSLTV…YFEKWSASML (140 aa). Residues H161, C196, E198, C200, H204, and M207 each contribute to the Cu cation site. Mg(2+) is bound at residue E198. Y218 is modified (phosphotyrosine).

Belongs to the cytochrome c oxidase subunit 2 family. In terms of assembly, component of the cytochrome c oxidase (complex IV, CIV), a multisubunit enzyme composed of 14 subunits. The complex is composed of a catalytic core of 3 subunits MT-CO1, MT-CO2 and MT-CO3, encoded in the mitochondrial DNA, and 11 supernumerary subunits COX4I, COX5A, COX5B, COX6A, COX6B, COX6C, COX7A, COX7B, COX7C, COX8 and NDUFA4, which are encoded in the nuclear genome. The complex exists as a monomer or a dimer and forms supercomplexes (SCs) in the inner mitochondrial membrane with NADH-ubiquinone oxidoreductase (complex I, CI) and ubiquinol-cytochrome c oxidoreductase (cytochrome b-c1 complex, complex III, CIII), resulting in different assemblies (supercomplex SCI(1)III(2)IV(1) and megacomplex MCI(2)III(2)IV(2)). Found in a complex with TMEM177, COA6, COX18, COX20, SCO1 and SCO2. Interacts with TMEM177 in a COX20-dependent manner. Interacts with COX20. Interacts with COX16. Requires Cu cation as cofactor.

It localises to the mitochondrion inner membrane. It catalyses the reaction 4 Fe(II)-[cytochrome c] + O2 + 8 H(+)(in) = 4 Fe(III)-[cytochrome c] + 2 H2O + 4 H(+)(out). Component of the cytochrome c oxidase, the last enzyme in the mitochondrial electron transport chain which drives oxidative phosphorylation. The respiratory chain contains 3 multisubunit complexes succinate dehydrogenase (complex II, CII), ubiquinol-cytochrome c oxidoreductase (cytochrome b-c1 complex, complex III, CIII) and cytochrome c oxidase (complex IV, CIV), that cooperate to transfer electrons derived from NADH and succinate to molecular oxygen, creating an electrochemical gradient over the inner membrane that drives transmembrane transport and the ATP synthase. Cytochrome c oxidase is the component of the respiratory chain that catalyzes the reduction of oxygen to water. Electrons originating from reduced cytochrome c in the intermembrane space (IMS) are transferred via the dinuclear copper A center (CU(A)) of subunit 2 and heme A of subunit 1 to the active site in subunit 1, a binuclear center (BNC) formed by heme A3 and copper B (CU(B)). The BNC reduces molecular oxygen to 2 water molecules using 4 electrons from cytochrome c in the IMS and 4 protons from the mitochondrial matrix. This Bubalus depressicornis (Lowland anoa) protein is Cytochrome c oxidase subunit 2 (MT-CO2).